A 358-amino-acid chain; its full sequence is Probable anti-sigma-M factor YhdL (358 aa).

The helical transmembrane segment at 74–96 (ISVLAVISTLMILPLCTLGSYLY) threads the bilayer.

As to quaternary structure, the N-terminus of YhdL interacts with sigma-M. YhdL interacts specifically with YhdK.

Its subcellular location is the membrane. The chain is Probable anti-sigma-M factor YhdL (yhdL) from Bacillus subtilis (strain 168).